The chain runs to 562 residues: Exonuclease subunit 2 (562 aa).

36–43 (GKNGGGKS) serves as a coordination point for ATP.

To phage T5 protein D13 and to yeast RAD52. As to quaternary structure, consists of two subunits: Gp47 and Gp46.

In terms of biological role, exonuclease involved in phage DNA recombination, replication, and repair. This Escherichia phage RB69 (Bacteriophage RB69) protein is Exonuclease subunit 2 (46).